Reading from the N-terminus, the 661-residue chain is Peroxisomal acyl-coenzyme A oxidase 1 (661 aa).

N6-succinyllysine occurs at positions 89 and 90. Position 139 (T139) interacts with FAD. At K159 the chain carries N6-succinyllysine. Residue G178 coordinates FAD. The residue at position 216 (K216) is an N6-acetyllysine. At K241 the chain carries N6-succinyllysine. An N6-acetyllysine mark is found at K255, K267, and K272. N6-succinyllysine is present on K349. E421 functions as the Proton acceptor in the catalytic mechanism. K437, K446, K512, and K637 each carry N6-acetyllysine; alternate. N6-succinyllysine; alternate is present on residues K437, K446, K512, and K637. K643 bears the N6-succinyllysine mark. A Phosphoserine modification is found at S649. At K652 the chain carries N6-acetyllysine. K655 bears the N6-succinyllysine mark. A Microbody targeting signal motif is present at residues 659-661; that stretch reads SKL.

It belongs to the acyl-CoA oxidase family. In terms of assembly, homodimer. Interacts with LONP2. Requires FAD as cofactor.

It localises to the peroxisome. It catalyses the reaction a 2,3-saturated acyl-CoA + O2 = a (2E)-enoyl-CoA + H2O2. The catalysed reaction is hexadecanoyl-CoA + O2 = (2E)-hexadecenoyl-CoA + H2O2. It carries out the reaction dodecanoyl-CoA + O2 = (2E)-dodecenoyl-CoA + H2O2. The enzyme catalyses octanoyl-CoA + O2 = (2E)-octenoyl-CoA + H2O2. It catalyses the reaction decanoyl-CoA + O2 = (2E)-decenoyl-CoA + H2O2. The catalysed reaction is tetradecanoyl-CoA + O2 = (2E)-tetradecenoyl-CoA + H2O2. It carries out the reaction hexadecanedioyl-CoA + O2 = (2E)-hexadecenedioyl-CoA + H2O2. The enzyme catalyses tetracosanoyl-CoA + O2 = (2E)-tetracosenoyl-CoA + H2O2. It catalyses the reaction glutaryl-CoA + O2 = (2E)-glutaconyl-CoA + H2O2. The catalysed reaction is hexanoyl-CoA + O2 = (2E)-hexenoyl-CoA + H2O2. It carries out the reaction octadecanoyl-CoA + O2 = (2E)-octadecenoyl-CoA + H2O2. The enzyme catalyses (5Z,8Z,11Z,14Z,17Z)-eicosapentaenoyl-CoA + O2 = (2E,5Z,8Z,11Z,14Z,17Z)-icosahexaenoyl-CoA + H2O2. It catalyses the reaction (6Z,9Z,12Z,15Z,18Z,21Z)-tetracosahexaenoyl-CoA + O2 = (2E,6Z,9Z,12Z,15Z,18Z,21Z)-tetracosaheptaenoyl-CoA + H2O2. It functions in the pathway lipid metabolism; peroxisomal fatty acid beta-oxidation. Involved in the initial and rate-limiting step of peroxisomal beta-oxidation of straight-chain saturated and unsaturated very-long-chain fatty acids. Catalyzes the desaturation of fatty acyl-CoAs such as palmitoyl-CoA (hexadecanoyl-CoA) to 2-trans-enoyl-CoAs ((2E)-enoyl-CoAs) such as (2E)-hexadecenoyl-CoA, and donates electrons directly to molecular oxygen (O(2)), thereby producing hydrogen peroxide (H(2)O(2)). Isoform 2 shows higher activity with hexadecanoyl-CoA as substrate than isoform 1. The sequence is that of Peroxisomal acyl-coenzyme A oxidase 1 (ACOX1) from Phascolarctos cinereus (Koala).